The chain runs to 400 residues: WW domain-containing transcription regulator protein 1 (400 aa).

A Glycyl lysine isopeptide (Lys-Gly) (interchain with G-Cter in ubiquitin) cross-link involves residue K46. Residues 52–117 (FFKEPDSGSH…QQHAHLRQQS (66 aa)) form a disordered region. Polar residues predominate over residues 61–70 (HSRQSSTDSS). S62 is modified (phosphoserine). S89 bears the Phosphoserine; by LATS2 mark. S105 carries the post-translational modification Phosphoserine. One can recognise a WW domain in the interval 124-157 (LPLPPGWEMTFTATGQRYFLNHIEKITTWQDPRK). A required for interaction with PALS1 region spans residues 222-400 (PNALTTQQQQ…NKSEPFLTWL (179 aa)). Residues 225–259 (LTTQQQQQQKLRLQRIQMERERIRMRQEELMRQEA) are a coiled coil. Position 295 is a phosphoserine (S295). S311 is subject to Phosphoserine; by LATS2. The PDZ-binding motif lies at 394–400 (EPFLTWL).

In terms of assembly, binds to SLC9A3R2 via the PDZ motif at the plasma membrane. Binds to YWHAZ in vivo and in vitro through the phosphoserine-binding motif RSHSSP. Interacts (via coiled-coil domain) with SMAD2 (via MH1 domain), SMAD3 and SMAD4. Interacts with MED15. Interacts with PAX8 and NKX2-1. Interacts with TEAD1, TEAD2, TEAD3 and TEAD4. Interacts (via WW domain) with PALS1. Interacts with LATS1. Interacts with YAP1 (when phosphorylated at 'Ser-127'). Interacts (via WW domain) with PRRG4 (via cytoplasmic domain). Interacts (via WW domain) with AMOTL2 (via PPXY motif); the interaction promotes WWTR1/TAZ localization to the cytoplasm and tight junctions, thereby inhibiting its transcriptional coactivator properties. Interacts (via WW domain) with AMOT isoform 1; the interaction facilitates translocation of WWTR1/TAZ to the cytoplasm. In terms of processing, phosphorylated by LATS2 and STK3/MST2. Phosphorylation by LATS2 results in creation of 14-3-3 binding sites, retention in the cytoplasm, and functional inactivation. Phosphorylation results in the inhibition of transcriptional coactivation through YWHAZ-mediated nuclear export. Phosphorylated in the nucleus by PRP4K; phosphorylation leads to nuclear exclusion. Post-translationally, ubiquitinated at Lys-46; leading to proteasomal degradation. Deubiquitinated and stabilized by UCHL1 at Lys-46; leading to inhibition of osteoclastogenesis. In terms of tissue distribution, highly expressed in kidney, heart, placenta and lung. Expressed in the thyroid tissue.

Its subcellular location is the nucleus. It is found in the cytoplasm. The protein resides in the cell membrane. The protein localises to the cell junction. It localises to the tight junction. In terms of biological role, transcriptional coactivator which acts as a downstream regulatory target in the Hippo signaling pathway that plays a pivotal role in organ size control and tumor suppression by restricting proliferation and promoting apoptosis. The core of this pathway is composed of a kinase cascade wherein STK3/MST2 and STK4/MST1, in complex with its regulatory protein SAV1, phosphorylates and activates LATS1/2 in complex with its regulatory protein MOB1, which in turn phosphorylates and inactivates YAP1 oncoprotein and WWTR1/TAZ. WWTR1 enhances PAX8 and NKX2-1/TTF1-dependent gene activation. In conjunction with YAP1, involved in the regulation of TGFB1-dependent SMAD2 and SMAD3 nuclear accumulation. Plays a key role in coupling SMADs to the transcriptional machinery such as the mediator complex. Regulates embryonic stem-cell self-renewal, promotes cell proliferation and epithelial-mesenchymal transition. This chain is WW domain-containing transcription regulator protein 1, found in Homo sapiens (Human).